Consider the following 468-residue polypeptide: H(+)/Cl(-) exchange transporter ClcA (468 aa).

Residues 1–30 (MSTRETFKISLLAKMPKDVINQFLSKDKTP) are Cytoplasmic-facing. Residues 31–67 (FSVLFLSLLVGILAGLVGTYFEQAVHLVSETRTDWLK) traverse the membrane as a helical segment. The Periplasmic segment spans residues 68–74 (SEIGSFL). A helical transmembrane segment spans residues 75 to 98 (PLWLAAFLISAFLAFIGYFLVHRF). Residues 104 to 108 (GSGIP) carry the Selectivity filter part_1 motif. Residue S105 participates in chloride binding. Residues 107–114 (IPEIEGAM) constitute an intramembrane region (helical). At 115 to 121 (DGMRPVR) the chain is on the cytoplasmic side. 2 helical membrane-spanning segments follow: residues 122–139 (WWRV…ALGS) and 146–164 (EGPT…SDIF). The Selectivity filter part_2 signature appears at 144–148 (GREGP). Over 165–174 (RVKNEDTRHS) the chain is Cytoplasmic. 2 consecutive intramembrane regions (helical) follow at residues 175–187 (LLAA…LAAA) and 191–199 (PLAGIMFVI). Over 200–212 (EEMRPQFRYTLIS) the chain is Cytoplasmic. The chain crosses the membrane as a helical span at residues 213–230 (VRAVIISAVAANIVFRVI). The Periplasmic segment spans residues 231–250 (NGQDAVITMPQYDAPELSTL). Residues 251–279 (GLFLLLGALFGVFGVLFNYLITLAQDLFV) traverse the membrane as a helical segment. The Cytoplasmic segment spans residues 280-285 (KFHRND). A helical membrane pass occupies residues 286 to 307 (RKRYLLTGSMIGGCFGLLLLYV). Topologically, residues 308–327 (PELTGGGISLIPTITNGGYG) are periplasmic. 2 consecutive transmembrane segments (helical) span residues 328–347 (AGIL…LCFG) and 353–374 (GIFA…LIAK). The short motif at 353–357 (GIFAP) is the Selectivity filter part_3 element. The chloride site is built by I354 and F355. Over 375–384 (MWFPELNIEP) the chain is Periplasmic. Positions 385 to 399 (GMFAIAGMGALFAAT) form an intramembrane region, helical. The note=Loop between two helices intramembrane region spans 400–402 (VRA). Residues 403 to 414 (PITGILLVIEMT) constitute an intramembrane region (helical). The note=Loop between two helices intramembrane region spans 415–419 (NNYHL). The chain crosses the membrane as a helical span at residues 420–436 (ILPLIITSLGAVIFAQL). At 437 to 468 (LGGQPIYSQLLHRTLKNQKLQQQDLPPQSPNS) the chain is on the cytoplasmic side. A chloride-binding site is contributed by Y443.

This sequence belongs to the chloride channel (TC 2.A.49) family. ClcA subfamily. Homodimer.

It is found in the cell inner membrane. The catalysed reaction is 2 chloride(in) + H(+)(out) = 2 chloride(out) + H(+)(in). In terms of biological role, proton-coupled chloride transporter. Functions as antiport system and exchanges two chloride ions for 1 proton. Probably acts as an electrical shunt for an outwardly-directed proton pump that is linked to amino acid decarboxylation, as part of the extreme acid resistance (XAR) response. This Vibrio cholerae serotype O1 (strain ATCC 39315 / El Tor Inaba N16961) protein is H(+)/Cl(-) exchange transporter ClcA.